A 295-amino-acid polypeptide reads, in one-letter code: UDP-N-acetylenolpyruvoylglucosamine reductase (295 aa).

The 165-residue stretch at 24–188 (KVGGNAEIFF…LKVVFKINKG (165 aa)) folds into the FAD-binding PCMH-type domain. Arginine 168 is a catalytic residue. The active-site Proton donor is the serine 217. Glutamate 287 is an active-site residue.

This sequence belongs to the MurB family. FAD serves as cofactor.

The protein localises to the cytoplasm. It catalyses the reaction UDP-N-acetyl-alpha-D-muramate + NADP(+) = UDP-N-acetyl-3-O-(1-carboxyvinyl)-alpha-D-glucosamine + NADPH + H(+). The protein operates within cell wall biogenesis; peptidoglycan biosynthesis. Its function is as follows. Cell wall formation. This Rickettsia peacockii (strain Rustic) protein is UDP-N-acetylenolpyruvoylglucosamine reductase.